We begin with the raw amino-acid sequence, 213 residues long: Imidazole glycerol phosphate synthase subunit HisH (213 aa).

In terms of domain architecture, Glutamine amidotransferase type-1 spans 4 to 211; it reads NIGLIDYGMG…LAWLKKETKD (208 aa). The active-site Nucleophile is the cysteine 82. Active-site residues include histidine 186 and glutamate 188.

In terms of assembly, heterodimer of HisH and HisF.

It is found in the cytoplasm. The enzyme catalyses 5-[(5-phospho-1-deoxy-D-ribulos-1-ylimino)methylamino]-1-(5-phospho-beta-D-ribosyl)imidazole-4-carboxamide + L-glutamine = D-erythro-1-(imidazol-4-yl)glycerol 3-phosphate + 5-amino-1-(5-phospho-beta-D-ribosyl)imidazole-4-carboxamide + L-glutamate + H(+). It carries out the reaction L-glutamine + H2O = L-glutamate + NH4(+). It functions in the pathway amino-acid biosynthesis; L-histidine biosynthesis; L-histidine from 5-phospho-alpha-D-ribose 1-diphosphate: step 5/9. In terms of biological role, IGPS catalyzes the conversion of PRFAR and glutamine to IGP, AICAR and glutamate. The HisH subunit catalyzes the hydrolysis of glutamine to glutamate and ammonia as part of the synthesis of IGP and AICAR. The resulting ammonia molecule is channeled to the active site of HisF. The sequence is that of Imidazole glycerol phosphate synthase subunit HisH from Prochlorococcus marinus (strain SARG / CCMP1375 / SS120).